We begin with the raw amino-acid sequence, 168 residues long: S-ribosylhomocysteine lyase (168 aa).

Residues His-54, His-58, and Cys-128 each coordinate Fe cation.

The protein belongs to the LuxS family. Homodimer. Fe cation is required as a cofactor.

It carries out the reaction S-(5-deoxy-D-ribos-5-yl)-L-homocysteine = (S)-4,5-dihydroxypentane-2,3-dione + L-homocysteine. In terms of biological role, involved in the synthesis of autoinducer 2 (AI-2) which is secreted by bacteria and is used to communicate both the cell density and the metabolic potential of the environment. The regulation of gene expression in response to changes in cell density is called quorum sensing. Catalyzes the transformation of S-ribosylhomocysteine (RHC) to homocysteine (HC) and 4,5-dihydroxy-2,3-pentadione (DPD). The polypeptide is S-ribosylhomocysteine lyase (Mannheimia succiniciproducens (strain KCTC 0769BP / MBEL55E)).